The following is a 544-amino-acid chain: Sialidase (544 aa).

Residues 1 to 22 (MKKAVILFSLFCFLCAIPVVQA) form the signal peptide. BNR repeat units follow at residues 239–250 (SRSTDGGKTWEK), 318–329 (AKSTDDGKTWSA), and 378–389 (MYSKDGGKNWKM). The active site involves glutamate 399. Arginine 415 contacts substrate. The stretch at 425 to 436 (AITKDLGKTWTE) is one BNR 4 repeat. Substrate is bound at residue arginine 479. Residues 485–496 (KISLDGGVTWSP) form a BNR 5 repeat.

Belongs to the glycosyl hydrolase 33 family.

It localises to the periplasm. The enzyme catalyses Hydrolysis of alpha-(2-&gt;3)-, alpha-(2-&gt;6)-, alpha-(2-&gt;8)- glycosidic linkages of terminal sialic acid residues in oligosaccharides, glycoproteins, glycolipids, colominic acid and synthetic substrates.. Functionally, sialidases have been suggested to be pathogenic factors in microbial infections. In Bacteroides fragilis (strain YCH46), this protein is Sialidase (nanH).